We begin with the raw amino-acid sequence, 36 residues long: Dolichyl-diphosphooligosaccharide--protein glycosyltransferase subunit OST4 (36 aa).

Residues 1-9 (MISDEQLNS) lie on the Lumenal side of the membrane. Residues 10–28 (LAITFGIVMMTLIVIYHAV) traverse the membrane as a helical segment. Residues 29 to 36 (DSTMSPKN) are Cytoplasmic-facing.

Belongs to the OST4 family. Component of the oligosaccharyltransferase (OST) complex, which appears to exist in two assemblies comprising OST1, OST2, OST4, OST5, STT3, SWP1, WPB1, and either OST3 or OST6. OST assembly occurs through the formation of 3 subcomplexes. Subcomplex 1 contains OST1 and OST5, subcomplex 2 contains STT3, OST3, and OST4, and subcomplex 3 contains OST2, WBP1, and SWP1. Interacts with SEC61, SBH1 and SSS1.

Its subcellular location is the endoplasmic reticulum membrane. The protein operates within protein modification; protein glycosylation. Subunit of the oligosaccharyl transferase (OST) complex that catalyzes the initial transfer of a defined glycan (Glc(3)Man(9)GlcNAc(2) in eukaryotes) from the lipid carrier dolichol-pyrophosphate to an asparagine residue within an Asn-X-Ser/Thr consensus motif in nascent polypeptide chains, the first step in protein N-glycosylation. N-glycosylation occurs cotranslationally and the complex associates with the Sec61 complex at the channel-forming translocon complex that mediates protein translocation across the endoplasmic reticulum (ER). All subunits are required for a maximal enzyme activity. This is Dolichyl-diphosphooligosaccharide--protein glycosyltransferase subunit OST4 (OST4) from Saccharomyces cerevisiae (strain ATCC 204508 / S288c) (Baker's yeast).